The sequence spans 265 residues: Hemin import ATP-binding protein HmuV (265 aa).

The 237-residue stretch at leucine 13–proline 249 folds into the ABC transporter domain. An ATP-binding site is contributed by glycine 45–serine 52.

It belongs to the ABC transporter superfamily. Heme (hemin) importer (TC 3.A.1.14.5) family. The complex is composed of two ATP-binding proteins (HmuV), two transmembrane proteins (HmuU) and a solute-binding protein (HmuT).

The protein resides in the cell inner membrane. Functionally, part of the ABC transporter complex HmuTUV involved in hemin import. Responsible for energy coupling to the transport system. The protein is Hemin import ATP-binding protein HmuV of Photobacterium damselae subsp. damselae (Listonella damsela).